The sequence spans 186 residues: Ribosome-recycling factor (186 aa).

This sequence belongs to the RRF family.

It localises to the cytoplasm. Responsible for the release of ribosomes from messenger RNA at the termination of protein biosynthesis. May increase the efficiency of translation by recycling ribosomes from one round of translation to another. The polypeptide is Ribosome-recycling factor (Chelativorans sp. (strain BNC1)).